The sequence spans 894 residues: Bifunctional glutamine synthetase adenylyltransferase/adenylyl-removing enzyme (894 aa).

The segment at 1 to 410 (MPANTSAAIA…HFEQVFILPS (410 aa)) is adenylyl removase. The tract at residues 415 to 894 (SHPLSELWLD…QVFEQALDFS (480 aa)) is adenylyl transferase.

The protein belongs to the GlnE family. It depends on Mg(2+) as a cofactor.

The enzyme catalyses [glutamine synthetase]-O(4)-(5'-adenylyl)-L-tyrosine + phosphate = [glutamine synthetase]-L-tyrosine + ADP. It catalyses the reaction [glutamine synthetase]-L-tyrosine + ATP = [glutamine synthetase]-O(4)-(5'-adenylyl)-L-tyrosine + diphosphate. Its function is as follows. Involved in the regulation of glutamine synthetase GlnA, a key enzyme in the process to assimilate ammonia. When cellular nitrogen levels are high, the C-terminal adenylyl transferase (AT) inactivates GlnA by covalent transfer of an adenylyl group from ATP to specific tyrosine residue of GlnA, thus reducing its activity. Conversely, when nitrogen levels are low, the N-terminal adenylyl removase (AR) activates GlnA by removing the adenylyl group by phosphorolysis, increasing its activity. The regulatory region of GlnE binds the signal transduction protein PII (GlnB) which indicates the nitrogen status of the cell. The polypeptide is Bifunctional glutamine synthetase adenylyltransferase/adenylyl-removing enzyme (Chromobacterium violaceum (strain ATCC 12472 / DSM 30191 / JCM 1249 / CCUG 213 / NBRC 12614 / NCIMB 9131 / NCTC 9757 / MK)).